Reading from the N-terminus, the 217-residue chain is Somatotropin (217 aa).

The first 26 residues, 1–26, serve as a signal peptide directing secretion; sequence MATGSRTSLLLAFTLLCLPQLKEAGA. His44 serves as a coordination point for Zn(2+). An intrachain disulfide couples Cys79 to Cys191. Ser132 is subject to Phosphoserine. Glu200 is a Zn(2+) binding site. Cys208 and Cys215 are oxidised to a cystine.

It belongs to the somatotropin/prolactin family.

The protein localises to the secreted. Its function is as follows. Plays an important role in growth control. Its major role in stimulating body growth is to stimulate the liver and other tissues to secrete IGF1. It stimulates both the differentiation and proliferation of myoblasts. It also stimulates amino acid uptake and protein synthesis in muscle and other tissues. The sequence is that of Somatotropin (GH1) from Saimiri boliviensis boliviensis (Bolivian squirrel monkey).